Reading from the N-terminus, the 137-residue chain is Holo-[acyl-carrier-protein] synthase (137 aa).

The Mg(2+) site is built by aspartate 8 and glutamate 58.

Belongs to the P-Pant transferase superfamily. AcpS family. Mg(2+) is required as a cofactor.

It is found in the cytoplasm. It carries out the reaction apo-[ACP] + CoA = holo-[ACP] + adenosine 3',5'-bisphosphate + H(+). In terms of biological role, transfers the 4'-phosphopantetheine moiety from coenzyme A to a Ser of acyl-carrier-protein. This Lactobacillus delbrueckii subsp. bulgaricus (strain ATCC 11842 / DSM 20081 / BCRC 10696 / JCM 1002 / NBRC 13953 / NCIMB 11778 / NCTC 12712 / WDCM 00102 / Lb 14) protein is Holo-[acyl-carrier-protein] synthase.